The primary structure comprises 472 residues: FAD-linked oxidoreductase azaL (472 aa).

The N-terminal stretch at 1-18 (MFRTILLCSLGLTTLSSA) is a signal peptide. Asn22, Asn44, Asn102, Asn123, Asn227, Asn246, Asn273, Asn305, Asn318, Asn390, and Asn415 each carry an N-linked (GlcNAc...) asparagine glycan. Positions 54–228 (TTYDAPTYIG…TSATYKIYNA (175 aa)) constitute an FAD-binding PCMH-type domain.

The protein belongs to the oxygen-dependent FAD-linked oxidoreductase family.

It participates in secondary metabolite biosynthesis. In terms of biological role, FAD-linked oxidoreductase; part of the gene cluster that mediates the biosynthesis of azaphilones, a class of fungal metabolites characterized by a highly oxygenated pyrano-quinone bicyclic core and exhibiting a broad range of bioactivities. In the first step, the non-reducing polyketide synthase azaA forms the hexaketide precursor from successive condensations of five malonyl-CoA units, presumably with a simple acetyl-CoA starter unit. The reactive polyketide chain then undergoes a PT-mediated C2-C7 cyclization to afford the aromatic ring and is eventually released as an aldehyde through the R-domain. The putative ketoreductase azaE is proposed to catalyze the reduction of the terminal ketone resulting in the early culture product FK17-P2a. The monooxygenase azaH was demonstrated to be the only enzyme required to convert FK17-P2a to azanigerone E. AzaH first hydroxylates the benzaldehyde intermediate FK17-P2a at C4, which triggers the formation of the pyran-ring to afford azanigerone E. In parallel, the 2,4-dimethylhexanoyl chain is synthesized by the HR-PKS azaB and is proposed to be transferred to the C4-hydroxyl of azanigerone E by the acyltransferase azaD directly from the ACP domain of azaB. Alternatively, the 2,4-dimethyl-hexanoyl chain may be offloaded from the HR-PKS as a carboxylic acid and converted to an acyl-CoA by azaF. The resulting acyl-CoA molecule could then be taken up as a substrate by AzaD to form azanigerone B. To yield the carboxylic acid substituent in azanigerone A, the hydroxypropyl side chain of azanigerone B would need to undergo a C-C oxidative cleavage catalyzed by cytochrome P450 AzaI. AzaI is proposed to act on a vicinal diol that leads to a C-C bond scission either through an alkoxyradical intermediate or a peroxy complex. In the biosynthesis of azanigerone A, azanigerone B first undergoes hydroxylation at C10, possibly catalyzed by one of the two FAD-dependent monooxygenases encoded in the cluster, azaG or azaL, resulting in the vicinal diol azanigerone C. Oxidative cleavage of azanigerone C by azaI would yield the corresponding aldehyde derivative of azanigerone A. Finally, the dehydrogenase azaJ is proposed to convert the aldehyde functional group into the carboxylic acid, completing the conversion from azanigerone B to azanigerone A. Alternatively, the oxidation of aldehyde to carboxylic acid may be catalyzed by the same P450 enzyme azaI via consecutive oxidation or by endogenous alcohol dehydrogenase. In Aspergillus niger (strain ATCC 1015 / CBS 113.46 / FGSC A1144 / LSHB Ac4 / NCTC 3858a / NRRL 328 / USDA 3528.7), this protein is FAD-linked oxidoreductase azaL.